Reading from the N-terminus, the 765-residue chain is ATP-dependent RNA helicase DBP4 (765 aa).

Basic residues predominate over residues 1 to 14; it reads MAKPRRNNKNKKGQ. The interval 1–24 is disordered; it reads MAKPRRNNKNKKGQSRSQAREKEE. Positions 47 to 75 match the Q motif motif; it reads SQFSDLPITQETLRGLNESSFMSLTDIQK. Positions 78 to 252 constitute a Helicase ATP-binding domain; that stretch reads IPIALKGEDL…RLSLTNPKRI (175 aa). ATP is bound at residue 91-98; it reads ARTGSGKT. A DEAD box motif is present at residues 200 to 203; that stretch reads DEAD. Residues 266 to 438 form the Helicase C-terminal domain; sequence SLDQYYIRIP…SIRPQLQSLC (173 aa). Disordered regions lie at residues 493–526, 552–576, and 641–735; these read KGGS…NEAS, NGSQ…RKDH, and KEQK…DKHN. Positions 558–568 are enriched in acidic residues; it reads EDEDEEEEDDF. 2 stretches are compositionally biased toward basic and acidic residues: residues 641-653 and 678-688; these read KEQK…RETE and KEVEKRMRDEE.

The protein belongs to the DEAD box helicase family. DDX10/DBP4 subfamily. As to quaternary structure, interacts with the U3 and U14 snoRNAs. Associates with pre-ribosomal complexes.

The protein localises to the nucleus. Its subcellular location is the nucleolus. The enzyme catalyses ATP + H2O = ADP + phosphate + H(+). Functionally, ATP-dependent RNA helicase required for ribosome biogenesis. Involved in the release of U14 snoRNA in pre-ribosomal complexes. Required for pre-rRNA cleavage at site A2. This is ATP-dependent RNA helicase DBP4 (DBP4) from Scheffersomyces stipitis (strain ATCC 58785 / CBS 6054 / NBRC 10063 / NRRL Y-11545) (Yeast).